The primary structure comprises 272 residues: Methylesterase 8 (272 aa).

Ser102 (acyl-ester intermediate) is an active-site residue. Catalysis depends on charge relay system residues Asp222 and His250.

This sequence belongs to the AB hydrolase superfamily. Methylesterase family.

Functionally, methylesterase shown to have carboxylesterase activity in vitro. This Arabidopsis thaliana (Mouse-ear cress) protein is Methylesterase 8.